We begin with the raw amino-acid sequence, 467 residues long: Argininosuccinate lyase (467 aa).

The protein belongs to the lyase 1 family. Argininosuccinate lyase subfamily.

It is found in the cytoplasm. It carries out the reaction 2-(N(omega)-L-arginino)succinate = fumarate + L-arginine. Its pathway is amino-acid biosynthesis; L-arginine biosynthesis; L-arginine from L-ornithine and carbamoyl phosphate: step 3/3. This is Argininosuccinate lyase from Thioalkalivibrio sulfidiphilus (strain HL-EbGR7).